The primary structure comprises 277 residues: UBX domain-containing protein 10 (277 aa).

Residues 1–102 form a disordered region; it reads MAIEAPVNFA…APDEMPELLL (102 aa). Polar residues predominate over residues 16–31; it reads TVVSTAGDSSTWQPSS. The segment covering 35 to 50 has biased composition (basic residues); sequence HVIRPKSAKGRKRPNL. The segment covering 60–77 has biased composition (low complexity); the sequence is SPSALSSSPPPRSSGSPS. The residue at position 88 (Ser-88) is a Phosphoserine. The UBX domain maps to 191 to 268; that stretch reads DEEPRLLLAV…GILHKSVLGI (78 aa).

It belongs to the UBXN10 family. As to quaternary structure, interacts with CLUAP1; the interaction is direct and mediates interaction with the intraflagellar transport complex B (IFT-B). Interacts with VCP; the interaction is direct.

It is found in the cell projection. The protein resides in the cilium. In terms of biological role, VCP/p97-binding protein required for ciliogenesis. Acts as a tethering factor that facilitates recruitment of VCP/p97 to the intraflagellar transport complex B (IFT-B) in cilia. UBX domain-containing proteins act as tethering factors for VCP/p97 and may specify substrate specificity of VCP/p97. The protein is UBX domain-containing protein 10 of Mus musculus (Mouse).